Here is a 130-residue protein sequence, read N- to C-terminus: Small ribosomal subunit protein uS9 (130 aa).

Belongs to the universal ribosomal protein uS9 family.

This chain is Small ribosomal subunit protein uS9, found in Acidovorax ebreus (strain TPSY) (Diaphorobacter sp. (strain TPSY)).